We begin with the raw amino-acid sequence, 202 residues long: ATP-dependent Clp protease proteolytic subunit (202 aa).

Serine 98 serves as the catalytic Nucleophile. Residue histidine 123 is part of the active site.

Belongs to the peptidase S14 family. In terms of assembly, fourteen ClpP subunits assemble into 2 heptameric rings which stack back to back to give a disk-like structure with a central cavity, resembling the structure of eukaryotic proteasomes.

The protein localises to the cytoplasm. It carries out the reaction Hydrolysis of proteins to small peptides in the presence of ATP and magnesium. alpha-casein is the usual test substrate. In the absence of ATP, only oligopeptides shorter than five residues are hydrolyzed (such as succinyl-Leu-Tyr-|-NHMec, and Leu-Tyr-Leu-|-Tyr-Trp, in which cleavage of the -Tyr-|-Leu- and -Tyr-|-Trp bonds also occurs).. Functionally, cleaves peptides in various proteins in a process that requires ATP hydrolysis. Has a chymotrypsin-like activity. Plays a major role in the degradation of misfolded proteins. The polypeptide is ATP-dependent Clp protease proteolytic subunit (Desulfovibrio desulfuricans (strain ATCC 27774 / DSM 6949 / MB)).